The following is a 209-amino-acid chain: Small ribosomal subunit protein uS4 (209 aa).

The S4 RNA-binding domain occupies 98–161 (ARLDNVVYRM…RDLEVIKKAV (64 aa)).

The protein belongs to the universal ribosomal protein uS4 family. In terms of assembly, part of the 30S ribosomal subunit. Contacts protein S5. The interaction surface between S4 and S5 is involved in control of translational fidelity.

Functionally, one of the primary rRNA binding proteins, it binds directly to 16S rRNA where it nucleates assembly of the body of the 30S subunit. With S5 and S12 plays an important role in translational accuracy. This Thermotoga petrophila (strain ATCC BAA-488 / DSM 13995 / JCM 10881 / RKU-1) protein is Small ribosomal subunit protein uS4.